A 238-amino-acid chain; its full sequence is DNA repair protein RecO (238 aa).

It belongs to the RecO family.

In terms of biological role, involved in DNA repair and RecF pathway recombination. The polypeptide is DNA repair protein RecO (Anaplasma marginale (strain Florida)).